Reading from the N-terminus, the 127-residue chain is Fatty acid-binding protein, liver (127 aa).

At methionine 1 the chain carries N-acetylmethionine. The residue at position 11 (serine 11) is a Phosphoserine. Residues lysine 31 and lysine 36 each carry the N6-succinyllysine modification. Position 39 is a phosphoserine (serine 39). Lysine 46 is modified (N6-succinyllysine). Threonine 51 is modified (phosphothreonine). Residues lysine 57 and lysine 78 each carry the N6-succinyllysine modification. Lysine 84 bears the N6-acetyllysine; alternate mark. Lysine 84 is subject to N6-succinyllysine; alternate. Lysine 90 is modified (N6-succinyllysine). A Phosphoserine modification is found at serine 100. At lysine 121 the chain carries N6-succinyllysine.

It belongs to the calycin superfamily. Fatty-acid binding protein (FABP) family.

The protein resides in the cytoplasm. Plays a role in lipoprotein-mediated cholesterol uptake in hepatocytes. Binds cholesterol. Binds free fatty acids and their coenzyme A derivatives, bilirubin, and some other small molecules in the cytoplasm. May be involved in intracellular lipid transport. In Mus musculus (Mouse), this protein is Fatty acid-binding protein, liver (Fabp1).